We begin with the raw amino-acid sequence, 132 residues long: Large ribosomal subunit protein uL22c (132 aa).

The protein belongs to the universal ribosomal protein uL22 family. As to quaternary structure, part of the 50S ribosomal subunit.

The protein resides in the plastid. It is found in the chloroplast. In terms of biological role, this protein binds specifically to 23S rRNA. Functionally, the globular domain of the protein is located near the polypeptide exit tunnel on the outside of the subunit, while an extended beta-hairpin is found that lines the wall of the exit tunnel in the center of the 70S ribosome. The sequence is that of Large ribosomal subunit protein uL22c (rpl22) from Staurastrum punctulatum (Green alga).